Consider the following 437-residue polypeptide: MTTFSPREIVSELDRYIVGQADAKRAVAIALRNRWRRQQLHGPLREEVAPKNILMIGPTGCGKTEISRRLARLANAPFLKVEATKFTEVGYVGRDVEQIVRDLVEVGIGLKRDEKRRSVQARAEAAAEARILDALVGPTAGQATRDSFRRRLRAGELDDKEVEIELASAAPSGLPMFEIPGVPGAAMGAINLGDMLGKALGGQKGKPRRVTVRDAHAPLMAEESDKLLDQDAIVQEAVREVEDNGIVFLDEVDKICAREGRGGADVSREGVQRDLLPLIEGTTVATKHGPVKTDHILFIASGAFHVSKPSDLLPELQGRLPIRVELAPLTVDDFRRILTETEASLLKQAVALMATEGVAVTFTEDAVDALARVAVEVNSSVENIGARRLQTVLERVLDEISFTAPDRAGESVTIDAAYVRERVESLAQNADLSRFIL.

Residues V18, 60 to 65 (GCGKTE), D250, E315, and R387 contribute to the ATP site.

Belongs to the ClpX chaperone family. HslU subfamily. A double ring-shaped homohexamer of HslV is capped on each side by a ring-shaped HslU homohexamer. The assembly of the HslU/HslV complex is dependent on binding of ATP.

It is found in the cytoplasm. Functionally, ATPase subunit of a proteasome-like degradation complex; this subunit has chaperone activity. The binding of ATP and its subsequent hydrolysis by HslU are essential for unfolding of protein substrates subsequently hydrolyzed by HslV. HslU recognizes the N-terminal part of its protein substrates and unfolds these before they are guided to HslV for hydrolysis. The chain is ATP-dependent protease ATPase subunit HslU from Methylobacterium sp. (strain 4-46).